We begin with the raw amino-acid sequence, 116 residues long: MTDKKVTRLRRARKARLKMHELEVVRLCVFRSSQHIYAQVISADGSKVLASASTLDKDLRDGATGNIDAATKVGKLVAERAKAAGVSQVAFDRSGFKYHGRVKALADAAREGGLEF.

Belongs to the universal ribosomal protein uL18 family. As to quaternary structure, part of the 50S ribosomal subunit; part of the 5S rRNA/L5/L18/L25 subcomplex. Contacts the 5S and 23S rRNAs.

Functionally, this is one of the proteins that bind and probably mediate the attachment of the 5S RNA into the large ribosomal subunit, where it forms part of the central protuberance. The chain is Large ribosomal subunit protein uL18 from Pseudomonas putida (strain W619).